Consider the following 66-residue polypeptide: Large ribosomal subunit protein uL29 (66 aa).

Belongs to the universal ribosomal protein uL29 family.

This is Large ribosomal subunit protein uL29 from Bacillus mycoides (strain KBAB4) (Bacillus weihenstephanensis).